The sequence spans 592 residues: Methylenetetrahydrofolate reductase (NADH) 1 (592 aa).

Catalysis depends on Glu-21, which acts as the Proton donor/acceptor. Residues 21–26 (EFFPPK) and 52–53 (TW) contribute to the NAD(+) site. FAD-binding positions include 52 to 53 (TW), His-81, 111 to 113 (RGD), Tyr-153, 157 to 160 (HPDV), Asp-175, and Lys-182. Asp-113 contributes to the substrate binding site. Substrate-binding residues include Gln-193 and Tyr-285.

Belongs to the methylenetetrahydrofolate reductase family. Homodimer. The cofactor is FAD.

It carries out the reaction (6S)-5-methyl-5,6,7,8-tetrahydrofolate + NAD(+) = (6R)-5,10-methylene-5,6,7,8-tetrahydrofolate + NADH + H(+). Its pathway is one-carbon metabolism; tetrahydrofolate interconversion. Plant MTHFRs strongly prefer NADH over NADPH. Not inhibited by methionine or S-adenosylmethionine. Functionally, the probable reversibility of the MTHFR reaction in plants suggests that they can metabolize the methyl group of 5,10-methylenetetrahydrofolate to serine, sugars and starch. This is Methylenetetrahydrofolate reductase (NADH) 1 (MTHFR1) from Arabidopsis thaliana (Mouse-ear cress).